The primary structure comprises 120 residues: Large ribosomal subunit protein uL18 (120 aa).

The protein belongs to the universal ribosomal protein uL18 family. In terms of assembly, part of the 50S ribosomal subunit; part of the 5S rRNA/L5/L18/L25 subcomplex. Contacts the 5S and 23S rRNAs.

In terms of biological role, this is one of the proteins that bind and probably mediate the attachment of the 5S RNA into the large ribosomal subunit, where it forms part of the central protuberance. This is Large ribosomal subunit protein uL18 from Maricaulis maris (strain MCS10) (Caulobacter maris).